The primary structure comprises 345 residues: Ribonucleoside-diphosphate reductase small chain 2 (345 aa).

M1 carries the N-acetylmethionine modification. Residue Y131 is part of the active site. 2 positions are modified to phosphoserine: S169 and S332. T334 bears the Phosphothreonine mark. S336 carries the post-translational modification Phosphoserine. K337 is covalently cross-linked (Glycyl lysine isopeptide (Lys-Gly) (interchain with G-Cter in ubiquitin)).

The protein belongs to the ribonucleoside diphosphate reductase small chain family. Heterotetramer of two large (R1) and two small (R2) subunits. S.cerevisiae has two different R1 subunits (RNR1 and RNR3) and two different R2 subunits (RNR2 and RNR4). The functional form of the small subunits is a RNR2-RNR4 heterodimer, where RNR2 provides the iron-radical center and RNR4 is required for proper folding of RNR2 and assembly with the large subunits. Under normal growth conditions, the active form of the large subunits is a homodimer of the constitutively expressed RNR1. In damaged cells or cells arrested for DNA synthesis, the reductase consists of multiple species because of the association of the small subunits (RNR2-RNR4) with either the RNR1 homodimer or a heterodimer of RNR1 and the damage-inducible RNR3. Interacts with DIF1.

The protein localises to the nucleus. It catalyses the reaction a 2'-deoxyribonucleoside 5'-diphosphate + [thioredoxin]-disulfide + H2O = a ribonucleoside 5'-diphosphate + [thioredoxin]-dithiol. Functionally, provides the precursors necessary for DNA synthesis. Catalyzes the biosynthesis of deoxyribonucleotides from the corresponding ribonucleotides. RNR4 is required for proper folding of RNR2 and assembly with the large subunits. This chain is Ribonucleoside-diphosphate reductase small chain 2 (RNR4), found in Saccharomyces cerevisiae (strain ATCC 204508 / S288c) (Baker's yeast).